Consider the following 883-residue polypeptide: DNA double-strand break repair Rad50 ATPase (883 aa).

ATP is bound by residues lysine 12, 32 to 38, and glutamine 137; that span reads NGSGKSS. Residues 244-283 adopt a coiled-coil conformation; sequence ERYEESRTALADVEETIADVREAVAEAERERETLADRVSD. 2 disordered regions span residues 271 to 290 and 305 to 326; these read ERERETLADRVSDHRERASD and DDPDAEDASAERDAVADQREAV. The span at 313 to 326 shows a compositional bias: basic and acidic residues; the sequence is SAERDAVADQREAV. 2 coiled-coil regions span residues 336-389 and 414-452; these read AVSR…IEAL and LDDATAERDELRERVATLRADRQSAADRVAEAEALLDEG. Residues 407–506 form the Zinc-hook domain; it reads FGAAEAFLDD…RVDRGESLVA (100 aa). Residues cysteine 454 and cysteine 457 each coordinate Zn(2+). Residues 508–565 are disordered; it reads EDRVDDLEQQRERAVERRDEQADIADAKRDQAAEKRDRAADLDAEAEDARADAAAKRD. 2 coiled-coil regions span residues 571 to 604 and 668 to 720; these read RETLAALNADQTALKERLDALADLVDRLEAAADA and KLQA…VTAL.

Belongs to the SMC family. RAD50 subfamily. Homodimer. Forms a heterotetramer composed of two Mre11 subunits and two Rad50 subunits. Zn(2+) is required as a cofactor.

Part of the Rad50/Mre11 complex, which is involved in the early steps of DNA double-strand break (DSB) repair. Rad50 controls the balance between DNA end bridging and DNA resection via ATP-dependent structural rearrangements of the Rad50/Mre11 complex. The chain is DNA double-strand break repair Rad50 ATPase from Halobacterium salinarum (strain ATCC 700922 / JCM 11081 / NRC-1) (Halobacterium halobium).